A 116-amino-acid polypeptide reads, in one-letter code: Protein Rev (116 aa).

Phosphoserine; by host CK2 occurs at positions 5 and 8. Residues 18–26 form a homomultimerization region; sequence LIKFLYQSN. Residues 23–48 are disordered; it reads YQSNPPPSPEGTRQARRNRRRRWRAR. The short motif at 34–50 is the Nuclear localization signal and RNA-binding (RRE) element; that stretch reads TRQARRNRRRRWRARQR. Over residues 36–48 the composition is skewed to basic residues; the sequence is QARRNRRRRWRAR. Positions 73–84 match the Nuclear export signal and binding to XPO1 motif; it reads LQLPPLERLNLN. The tract at residues 90–116 is disordered; it reads GTSGTQGVGSPQIPVEPPAVLESGTEE. Phosphoserine; by host is present on residues serine 92 and serine 99.

This sequence belongs to the HIV-1 REV protein family. In terms of assembly, homomultimer; when bound to the RRE. Multimeric assembly is essential for activity and may involve XPO1. Binds to human KPNB1, XPO1, TNPO1, RANBP5 and IPO7. Interacts with the viral Integrase. Interacts with human KHDRBS1. Interacts with human NAP1; this interaction decreases Rev multimerization and stimulates its activity. Interacts with human DEAD-box helicases DDX3 and DDX24; these interactions may serve for viral RNA export to the cytoplasm and packaging, respectively. Interacts with human PSIP1; this interaction may inhibit HIV-1 DNA integration by promoting dissociation of the Integrase-LEDGF/p75 complex. Post-translationally, asymmetrically arginine dimethylated at one site by host PRMT6. Methylation impairs the RNA-binding activity and export of viral RNA from the nucleus to the cytoplasm. In terms of processing, phosphorylated by protein kinase CK2. Presence of, and maybe binding to the N-terminus of the regulatory beta subunit of CK2 is necessary for CK2-mediated Rev's phosphorylation.

The protein resides in the host nucleus. Its subcellular location is the host nucleolus. It is found in the host cytoplasm. Its function is as follows. Escorts unspliced or incompletely spliced viral pre-mRNAs (late transcripts) out of the nucleus of infected cells. These pre-mRNAs carry a recognition sequence called Rev responsive element (RRE) located in the env gene, that is not present in fully spliced viral mRNAs (early transcripts). This function is essential since most viral proteins are translated from unspliced or partially spliced pre-mRNAs which cannot exit the nucleus by the pathway used by fully processed cellular mRNAs. Rev itself is translated from a fully spliced mRNA that readily exits the nucleus. Rev's nuclear localization signal (NLS) binds directly to KPNB1/Importin beta-1 without previous binding to KPNA1/Importin alpha-1. KPNB1 binds to the GDP bound form of RAN (Ran-GDP) and targets Rev to the nucleus. In the nucleus, the conversion from Ran-GDP to Ran-GTP dissociates Rev from KPNB1 and allows Rev's binding to the RRE in viral pre-mRNAs. Rev multimerization on the RRE via cooperative assembly exposes its nuclear export signal (NES) to the surface. Rev can then form a complex with XPO1/CRM1 and Ran-GTP, leading to nuclear export of the complex. Conversion from Ran-GTP to Ran-GDP mediates dissociation of the Rev/RRE/XPO1/RAN complex, so that Rev can return to the nucleus for a subsequent round of export. Beside KPNB1, also seems to interact with TNPO1/Transportin-1, RANBP5/IPO5 and IPO7/RANBP7 for nuclear import. The nucleoporin-like HRB/RIP is an essential cofactor that probably indirectly interacts with Rev to release HIV RNAs from the perinuclear region to the cytoplasm. The chain is Protein Rev from Homo sapiens (Human).